We begin with the raw amino-acid sequence, 130 residues long: MAAESTKDMSVDLVAVERRLWSGQATFVSAQTTEGQIGIMPGHEPLLGQLVEGGIVNIVPVEGERIVAAVHGGFFSVTAGTVRILAESAEFAGEVDVDEARKVLADSAASDEELRVAQGRVRAVEQVASA.

The protein belongs to the ATPase epsilon chain family. In terms of assembly, F-type ATPases have 2 components, CF(1) - the catalytic core - and CF(0) - the membrane proton channel. CF(1) has five subunits: alpha(3), beta(3), gamma(1), delta(1), epsilon(1). CF(0) has three main subunits: a, b and c.

It is found in the cell membrane. Functionally, produces ATP from ADP in the presence of a proton gradient across the membrane. The chain is ATP synthase epsilon chain from Nocardia farcinica (strain IFM 10152).